Here is a 276-residue protein sequence, read N- to C-terminus: Dermonecrotic toxin LspiSicTox-betaIE4ii (276 aa).

Histidine 5 is an active-site residue. Mg(2+) contacts are provided by glutamate 25 and aspartate 27. Histidine 41 functions as the Nucleophile in the catalytic mechanism. Disulfide bonds link cysteine 45–cysteine 51 and cysteine 47–cysteine 189. Aspartate 85 is a binding site for Mg(2+).

This sequence belongs to the arthropod phospholipase D family. Class II subfamily. The cofactor is Mg(2+). Expressed by the venom gland.

The protein resides in the secreted. It catalyses the reaction an N-(acyl)-sphingosylphosphocholine = an N-(acyl)-sphingosyl-1,3-cyclic phosphate + choline. The catalysed reaction is an N-(acyl)-sphingosylphosphoethanolamine = an N-(acyl)-sphingosyl-1,3-cyclic phosphate + ethanolamine. The enzyme catalyses a 1-acyl-sn-glycero-3-phosphocholine = a 1-acyl-sn-glycero-2,3-cyclic phosphate + choline. It carries out the reaction a 1-acyl-sn-glycero-3-phosphoethanolamine = a 1-acyl-sn-glycero-2,3-cyclic phosphate + ethanolamine. Dermonecrotic toxins cleave the phosphodiester linkage between the phosphate and headgroup of certain phospholipids (sphingolipid and lysolipid substrates), forming an alcohol (often choline) and a cyclic phosphate. This toxin acts on sphingomyelin (SM). It may also act on ceramide phosphoethanolamine (CPE), lysophosphatidylcholine (LPC) and lysophosphatidylethanolamine (LPE), but not on lysophosphatidylserine (LPS), and lysophosphatidylglycerol (LPG). It acts by transphosphatidylation, releasing exclusively cyclic phosphate products as second products. Induces dermonecrosis, hemolysis, increased vascular permeability, edema, inflammatory response, and platelet aggregation. The polypeptide is Dermonecrotic toxin LspiSicTox-betaIE4ii (Loxosceles spinulosa (Recluse spider)).